The sequence spans 228 residues: Ribonuclease 3 (228 aa).

Positions Leu2–Gly130 constitute an RNase III domain. Residue Glu43 participates in Mg(2+) binding. Residue Asp47 is part of the active site. Mg(2+) contacts are provided by Asp116 and Glu119. Glu119 is an active-site residue. The DRBM domain maps to Asp157–Ile226.

It belongs to the ribonuclease III family. In terms of assembly, homodimer. It depends on Mg(2+) as a cofactor.

The protein resides in the cytoplasm. It catalyses the reaction Endonucleolytic cleavage to 5'-phosphomonoester.. Functionally, digests double-stranded RNA. Involved in the processing of primary rRNA transcript to yield the immediate precursors to the large and small rRNAs (23S and 16S). Processes some mRNAs, and tRNAs when they are encoded in the rRNA operon. Processes pre-crRNA and tracrRNA of type II CRISPR loci if present in the organism. In Caldanaerobacter subterraneus subsp. tengcongensis (strain DSM 15242 / JCM 11007 / NBRC 100824 / MB4) (Thermoanaerobacter tengcongensis), this protein is Ribonuclease 3.